The chain runs to 239 residues: Large ribosomal subunit protein uL2 (239 aa).

Disordered regions lie at residues 1–28 and 199–239; these read MGKRILPQRMGRGTPTFRSPSHRRVGPA and SHPH…RRKG. Basic residues predominate over residues 225–239; it reads KVGHIAARRTGRRKG.

Belongs to the universal ribosomal protein uL2 family. As to quaternary structure, part of the 50S ribosomal subunit. Forms a bridge to the 30S subunit in the 70S ribosome.

One of the primary rRNA binding proteins. Required for association of the 30S and 50S subunits to form the 70S ribosome, for tRNA binding and peptide bond formation. It has been suggested to have peptidyltransferase activity; this is somewhat controversial. Makes several contacts with the 16S rRNA in the 70S ribosome. In Staphylothermus marinus (strain ATCC 43588 / DSM 3639 / JCM 9404 / F1), this protein is Large ribosomal subunit protein uL2.